The following is a 212-amino-acid chain: MTQGAVKTTGKRSRAVSAKKKAILSAALDTFSQFGFHGTRLEQIAELAGVSKTNLLYYFPSKEALYIAVLRQILDIWLAPLKAFREDFAPLAAIKEYIRLKLEVSRDYPQASRLFCMEMLAGAPLLMDELTGDLKALIDEKSALIAGWVKSGKLAPIDPQHLIFMIWASTQHYADFAPQVEAVTGATLRDEVFFNQTVENVQRIIIEGIRPR.

Residues 17–77 (SAKKKAILSA…AVLRQILDIW (61 aa)) enclose the HTH tetR-type domain. A DNA-binding region (H-T-H motif) is located at residues 39–58 (TRLEQIAELAGVSKTNLLYY).

Homodimer.

Its function is as follows. Master transcription regulator which represses the degradation of pyrimidines (rutABCDEFG) and purines (gcl operon) for maintenance of metabolic balance between pyrimidines and purines. It also regulates the synthesis of pyrimidine nucleotides and arginine from glutamine (carAB) and the supply of glutamate (gadABWX). The chain is HTH-type transcriptional regulator RutR (rutR) from Escherichia coli O6:H1 (strain CFT073 / ATCC 700928 / UPEC).